A 303-amino-acid chain; its full sequence is Putative CRISPR-associated endonuclease Cas1 2 (303 aa).

E149 is a Mn(2+) binding site.

It belongs to the CRISPR-associated endonuclease Cas1 family. In terms of assembly, homodimer, forms a heterotetramer with a Cas2 homodimer. Mg(2+) serves as cofactor. The cofactor is Mn(2+).

In terms of biological role, CRISPR (clustered regularly interspaced short palindromic repeat), is an adaptive immune system that provides protection against mobile genetic elements (viruses, transposable elements and conjugative plasmids). CRISPR clusters contain sequences complementary to antecedent mobile elements and target invading nucleic acids. CRISPR clusters are transcribed and processed into CRISPR RNA (crRNA). Acts as a dsDNA endonuclease. Involved in the integration of spacer DNA into the CRISPR cassette. This Methanospirillum hungatei JF-1 (strain ATCC 27890 / DSM 864 / NBRC 100397 / JF-1) protein is Putative CRISPR-associated endonuclease Cas1 2.